The sequence spans 158 residues: Acetolactate synthase small subunit (158 aa).

Residues 4–78 (ILSVLLENES…DVLRVIKVGQ (75 aa)) enclose the ACT domain.

Belongs to the acetolactate synthase small subunit family. As to quaternary structure, dimer of large and small chains.

It carries out the reaction 2 pyruvate + H(+) = (2S)-2-acetolactate + CO2. The protein operates within amino-acid biosynthesis; L-isoleucine biosynthesis; L-isoleucine from 2-oxobutanoate: step 1/4. It participates in amino-acid biosynthesis; L-valine biosynthesis; L-valine from pyruvate: step 1/4. This is Acetolactate synthase small subunit (ilvH) from Buchnera aphidicola subsp. Schizaphis graminum (strain Sg).